We begin with the raw amino-acid sequence, 177 residues long: MLKSTLRLSRISLRRGFTTIDCLRQQNSDIDKIILNPIKLAQGSNSDRGQTSKSKTDNADILSMEIPVDMMQSAGRINKRELLSEAEIARSSVENAQMRFNSGKSIIVNKNNPAESFKRLNRIMFENNIPGDKRSQRFYMKPGKVAELKRSQRHRKEFMMGFKRLIEIVKDAKRKGY.

The transit peptide at 1–17 directs the protein to the mitochondrion; sequence MLKSTLRLSRISLRRGF.

It belongs to the bacterial ribosomal protein bS21 family. As to quaternary structure, component of the mitochondrial small ribosomal subunit (mt-SSU). Mature yeast 74S mitochondrial ribosomes consist of a small (37S) and a large (54S) subunit. The 37S small subunit contains a 15S ribosomal RNA (15S mt-rRNA) and 34 different proteins. The 54S large subunit contains a 21S rRNA (21S mt-rRNA) and 46 different proteins.

Its subcellular location is the mitochondrion. Component of the mitochondrial ribosome (mitoribosome), a dedicated translation machinery responsible for the synthesis of mitochondrial genome-encoded proteins, including at least some of the essential transmembrane subunits of the mitochondrial respiratory chain. The mitoribosomes are attached to the mitochondrial inner membrane and translation products are cotranslationally integrated into the membrane. The polypeptide is Small ribosomal subunit protein bS21m (MRP21) (Saccharomyces cerevisiae (strain ATCC 204508 / S288c) (Baker's yeast)).